We begin with the raw amino-acid sequence, 308 residues long: Ribonuclease Z (308 aa).

Positions 60, 62, 64, 65, 140, 209, and 269 each coordinate Zn(2+). The active-site Proton acceptor is the D64.

The protein belongs to the RNase Z family. As to quaternary structure, homodimer. Zn(2+) is required as a cofactor.

The enzyme catalyses Endonucleolytic cleavage of RNA, removing extra 3' nucleotides from tRNA precursor, generating 3' termini of tRNAs. A 3'-hydroxy group is left at the tRNA terminus and a 5'-phosphoryl group is left at the trailer molecule.. In terms of biological role, zinc phosphodiesterase, which displays some tRNA 3'-processing endonuclease activity. Probably involved in tRNA maturation, by removing a 3'-trailer from precursor tRNA. This is Ribonuclease Z from Methanococcus maripaludis (strain C6 / ATCC BAA-1332).